Consider the following 212-residue polypeptide: Thymidylate kinase (212 aa).

Residue G11–T18 coordinates ATP.

It belongs to the thymidylate kinase family.

The enzyme catalyses dTMP + ATP = dTDP + ADP. Phosphorylation of dTMP to form dTDP in both de novo and salvage pathways of dTTP synthesis. This chain is Thymidylate kinase, found in Buchnera aphidicola subsp. Schizaphis graminum (strain Sg).